A 211-amino-acid chain; its full sequence is Thiamine-phosphate synthase (211 aa).

4-amino-2-methyl-5-(diphosphooxymethyl)pyrimidine-binding positions include 37-41 (QLRIK) and N69. The Mg(2+) site is built by D70 and D89. A 4-amino-2-methyl-5-(diphosphooxymethyl)pyrimidine-binding site is contributed by S108. A 2-[(2R,5Z)-2-carboxy-4-methylthiazol-5(2H)-ylidene]ethyl phosphate-binding site is contributed by 134 to 136 (TQT). K137 serves as a coordination point for 4-amino-2-methyl-5-(diphosphooxymethyl)pyrimidine. 2-[(2R,5Z)-2-carboxy-4-methylthiazol-5(2H)-ylidene]ethyl phosphate-binding positions include G166 and 186 to 187 (VS).

Belongs to the thiamine-phosphate synthase family. Mg(2+) serves as cofactor.

The catalysed reaction is 2-[(2R,5Z)-2-carboxy-4-methylthiazol-5(2H)-ylidene]ethyl phosphate + 4-amino-2-methyl-5-(diphosphooxymethyl)pyrimidine + 2 H(+) = thiamine phosphate + CO2 + diphosphate. The enzyme catalyses 2-(2-carboxy-4-methylthiazol-5-yl)ethyl phosphate + 4-amino-2-methyl-5-(diphosphooxymethyl)pyrimidine + 2 H(+) = thiamine phosphate + CO2 + diphosphate. It catalyses the reaction 4-methyl-5-(2-phosphooxyethyl)-thiazole + 4-amino-2-methyl-5-(diphosphooxymethyl)pyrimidine + H(+) = thiamine phosphate + diphosphate. Its pathway is cofactor biosynthesis; thiamine diphosphate biosynthesis; thiamine phosphate from 4-amino-2-methyl-5-diphosphomethylpyrimidine and 4-methyl-5-(2-phosphoethyl)-thiazole: step 1/1. Condenses 4-methyl-5-(beta-hydroxyethyl)thiazole monophosphate (THZ-P) and 2-methyl-4-amino-5-hydroxymethyl pyrimidine pyrophosphate (HMP-PP) to form thiamine monophosphate (TMP). This Salmonella agona (strain SL483) protein is Thiamine-phosphate synthase.